Reading from the N-terminus, the 210-residue chain is Glutathione S-transferase P 10 (210 aa).

A GST N-terminal domain is found at 2–81 (AVPQLYYFTI…HLGRVHGLNG (80 aa)). Glutathione is bound by residues Y8, W41, K45, 52–53 (QL), and 65–66 (QT). In terms of domain architecture, GST C-terminal spans 83 to 200 (NEQEATFLDM…YLEKRKADKV (118 aa)).

It belongs to the GST superfamily. Pi family. Homodimer. As to expression, expressed in cells at the mouth and adjacent to the pharyngeal bulbs of the head and also in the tail.

The enzyme catalyses RX + glutathione = an S-substituted glutathione + a halide anion + H(+). Functionally, conjugation of reduced glutathione to a wide number of exogenous and endogenous hydrophobic electrophiles. Responsible for approximately one-third of 4-hydroxy-2-nonenal conjugation. May play a role in the detoxification of reactive oxygen species produced during pathogenic bacterial infection. In Caenorhabditis elegans, this protein is Glutathione S-transferase P 10.